Here is a 657-residue protein sequence, read N- to C-terminus: Methionine--tRNA ligase (657 aa).

The 'HIGH' region signature appears at 13–23; sequence YYPSGNLHIGH. Positions 308 to 312 match the 'KMSKS' region motif; the sequence is KMSKS. Lys-311 is an ATP binding site. Residues 557 to 657 form the tRNA-binding domain; that stretch reads DFDKVEIKAA…SAIPNGAVIK (101 aa).

This sequence belongs to the class-I aminoacyl-tRNA synthetase family. MetG type 2B subfamily. In terms of assembly, homodimer.

The protein resides in the cytoplasm. It carries out the reaction tRNA(Met) + L-methionine + ATP = L-methionyl-tRNA(Met) + AMP + diphosphate. Is required not only for elongation of protein synthesis but also for the initiation of all mRNA translation through initiator tRNA(fMet) aminoacylation. This chain is Methionine--tRNA ligase, found in Staphylococcus aureus (strain MRSA252).